The following is a 534-amino-acid chain: ATP-dependent rRNA helicase RRP3 (534 aa).

The segment at 67 to 107 is disordered; it reads KQQALQKQQKQQKQQEQENANHNQTESSLSSSSSTTSSSIT. 2 stretches are compositionally biased toward low complexity: residues 68-80 and 91-107; these read QQALQKQQKQQKQ and TESSLSSSSSTTSSSIT. Residues 118–146 carry the Q motif motif; sequence KTFKELNLVPDLLESIESMKFTKPTPIQS. A Helicase ATP-binding domain is found at 149–320; sequence IPHALEGKDI…RASLHNPVRV (172 aa). Residue 162 to 169 coordinates ATP; sequence AQTGSGKT. The short motif at 268–271 is the DEAD box element; sequence DEAD. Residues 347-492 enclose the Helicase C-terminal domain; that stretch reads ILIHLLNEFM…EDKPPKEVLD (146 aa). 2 stretches are compositionally biased toward basic and acidic residues: residues 505–517 and 525–534; these read AIRQTKEIHDKRN and NRDDADREER. Residues 505–534 are disordered; it reads AIRQTKEIHDKRNGGGGRRRNRDDADREER.

This sequence belongs to the DEAD box helicase family. DDX47/RRP3 subfamily. Interacts with the SSU processome.

It localises to the nucleus. The catalysed reaction is ATP + H2O = ADP + phosphate + H(+). In terms of biological role, ATP-dependent rRNA helicase required for pre-ribosomal RNA processing. Involved in the maturation of the 35S-pre-rRNA and to its cleavage to mature 18S rRNA. This is ATP-dependent rRNA helicase RRP3 from Candida albicans (strain SC5314 / ATCC MYA-2876) (Yeast).